Consider the following 657-residue polypeptide: tRNA 5-methylaminomethyl-2-thiouridine biosynthesis bifunctional protein MnmC (657 aa).

Positions 1 to 235 are tRNA (mnm(5)s(2)U34)-methyltransferase; the sequence is MSDAHNAQLD…KREMLAGPFQ (235 aa). The interval 261–657 is FAD-dependent cmnm(5)s(2)U34 oxidoreductase; it reads IGAGLAGCAT…QLIRGTGSPT (397 aa).

The protein in the N-terminal section; belongs to the methyltransferase superfamily. tRNA (mnm(5)s(2)U34)-methyltransferase family. In the C-terminal section; belongs to the DAO family. Requires FAD as cofactor.

It is found in the cytoplasm. The catalysed reaction is 5-aminomethyl-2-thiouridine(34) in tRNA + S-adenosyl-L-methionine = 5-methylaminomethyl-2-thiouridine(34) in tRNA + S-adenosyl-L-homocysteine + H(+). In terms of biological role, catalyzes the last two steps in the biosynthesis of 5-methylaminomethyl-2-thiouridine (mnm(5)s(2)U) at the wobble position (U34) in tRNA. Catalyzes the FAD-dependent demodification of cmnm(5)s(2)U34 to nm(5)s(2)U34, followed by the transfer of a methyl group from S-adenosyl-L-methionine to nm(5)s(2)U34, to form mnm(5)s(2)U34. This is tRNA 5-methylaminomethyl-2-thiouridine biosynthesis bifunctional protein MnmC from Ectopseudomonas mendocina (strain ymp) (Pseudomonas mendocina).